Reading from the N-terminus, the 486-residue chain is Glutamate--tRNA ligase (486 aa).

Residues 11–21 carry the 'HIGH' region motif; the sequence is PSPTGLLHIGN. Residues 255–259 carry the 'KMSKS' region motif; it reads KLSKR. Position 258 (K258) interacts with ATP.

This sequence belongs to the class-I aminoacyl-tRNA synthetase family. Glutamate--tRNA ligase type 1 subfamily. As to quaternary structure, monomer.

It is found in the cytoplasm. The catalysed reaction is tRNA(Glu) + L-glutamate + ATP = L-glutamyl-tRNA(Glu) + AMP + diphosphate. Its function is as follows. Catalyzes the attachment of glutamate to tRNA(Glu) in a two-step reaction: glutamate is first activated by ATP to form Glu-AMP and then transferred to the acceptor end of tRNA(Glu). The chain is Glutamate--tRNA ligase from Streptococcus pneumoniae (strain Hungary19A-6).